The following is a 175-amino-acid chain: Large ribosomal subunit protein uL10 (175 aa).

Belongs to the universal ribosomal protein uL10 family. As to quaternary structure, part of the ribosomal stalk of the 50S ribosomal subunit. The N-terminus interacts with L11 and the large rRNA to form the base of the stalk. The C-terminus forms an elongated spine to which L12 dimers bind in a sequential fashion forming a multimeric L10(L12)X complex.

Forms part of the ribosomal stalk, playing a central role in the interaction of the ribosome with GTP-bound translation factors. The chain is Large ribosomal subunit protein uL10 from Alkalilimnicola ehrlichii (strain ATCC BAA-1101 / DSM 17681 / MLHE-1).